Here is a 1240-residue protein sequence, read N- to C-terminus: MPTLWSPSTQHHGSSSGSESSPLQKSVRRAQMALSPCSSSILPCDDRDSQGTAEWDSPSTNEDSDFEDSLRRNVKKRAAKQPPKAVPAAKHRKKQSRIVSSGNGKNESVPSTNYLFDAVKAARSCMQSLVDEWLDNYKQDENAGFLELINFFIRACGCKSTVTPEMFKTMSNSEIIQHLTEEFNEDSGDYPLTAPGPSWKKFQGSFCEFVKTLVYQCQYSLLYDGFPMDDLISLLIGLSDSQVRAFRHTSTLAAMKLMTSLVKVALQLSLHKDNNQRQYEAERNKGPEQRAPERLESLLEKRKEFQENQEDIEGMMNAIFRGVFVHRYRDILPEIRAICIEEIGYWMQSYSTSFLNDSYLKYIGWTLHDKHKEVRLKCVKALAGLYSNQELSLRMELFTNRFKDRMVSMVMDRECEVAVEAIRLLTLILKNMEGVLTSADCEKIYSIVYISNRAMASSAGEFVYWKIFHPECGAKAVSDRERRRSPQAQKTFIYLLLAFFMESEHHNHAAYLVDSLWDCAGSYLKDWESLTNLLLQKDQNLGDMQERMLIEILVSSARQAAEGHPPVGRITGKKSLTAKERKLQAYDKMKLAEHLIPLLPQLLAKFSADAENVAPLLQLLSYFDLSIYCTQRLEKHLELLLQQLQEVVVKHVEPEVLEAAAHALYLLCKPEFTFFSRVDFARSQLVDFLTDRFQQELDDLMQSSFLDEDEVYSLTATLKRLSAFYNAHDLTRWEISEPCSRLLRKAVDTGEVPHQVILPALTLVYFSILWTVTHISESTSHKQLMSLKKRMVAFCELCQSCLSDVDPEIQEQAFVLLSDLLLIFSPQMIVGGRDFLRPLVFFPEATLQSELASFLMDHVFLQPGELGNGQSQEDHVQIELLHQRRRLLAGFCKLLLYGVLELDAASDVFKHYNKFYEDYGDIIKETLTRARQIDRCQCSRILLLSLKQLYTELIQEQGPQGLTELPAFIEMRDLARRFALSFGPQQLHNRDLVVMLHKEGIKFSLSELPPAGSSHEPPNLAFLELLSEFSPRLFHQDKRLLLSYLEKCLQRVSKAPNHPWGPVTTYCHSLHPLEITAEASPRGPPHSKKRCVEGPCRPQEEESSSQEESLQLNSGPTTPTLTSTAVKRKQSLRTVGKKQKGRPGPGPGPGPELICSQQLLGTQRLKMSSAPCFQIRCDPSGSGLGKQLTRLSLMEEDEEEELRLLDEEWQRGDKMLHSPSSPSEHGLDLLDTTELNMEDF.

Over residues 1 to 25 (MPTLWSPSTQHHGSSSGSESSPLQK) the composition is skewed to low complexity. The tract at residues 1–108 (MPTLWSPSTQ…VSSGNGKNES (108 aa)) is disordered. The span at 97–108 (RIVSSGNGKNES) shows a compositional bias: polar residues. Positions 324 to 409 (FVHRYRDILP…NRFKDRMVSM (86 aa)) constitute an SCD domain. Disordered stretches follow at residues 1077–1154 (AEAS…PELI) and 1213–1240 (DKML…MEDF). Residues 1115–1125 (GPTTPTLTSTA) are compositionally biased toward polar residues. A compositionally biased stretch (basic residues) spans 1126–1141 (VKRKQSLRTVGKKQKG). The residue at position 1218 (S1218) is a Phosphoserine.

This sequence belongs to the SCC3 family. As to quaternary structure, component of the meiosis-specific cohesin complex, which also contains the SMC1 (SMC1A or SMC1B) and SMC3 heterodimer. Such complex likely contains RAD21, or the meiosis-specific related protein REC8. Interacts with CCDC79/TERB1; recruiting cohesin to telomeres to develop structural rigidity. Phosphorylated. In terms of tissue distribution, testis specific.

It localises to the nucleus. Its subcellular location is the chromosome. It is found in the centromere. In terms of biological role, meiosis specific component of cohesin complex. The cohesin complex is required for the cohesion of sister chromatids after DNA replication. The cohesin complex apparently forms a large proteinaceous ring within which sister chromatids can be trapped. At anaphase, the complex is cleaved and dissociates from chromatin, allowing sister chromatids to segregate. The meiosis-specific cohesin complex probably replaces mitosis specific cohesin complex when it dissociates from chromatin during prophase I. The protein is Cohesin subunit SA-3 (Stag3) of Mus musculus (Mouse).